Reading from the N-terminus, the 269-residue chain is Diaminopimelate epimerase (269 aa).

Substrate is bound by residues Asn-13, Gln-47, and Asn-65. Cys-74 acts as the Proton donor in catalysis. Substrate contacts are provided by residues 75–76 (GN), Asn-149, Asn-182, and 200–201 (ER). Cys-209 serves as the catalytic Proton acceptor. 210 to 211 (GT) is a binding site for substrate.

It belongs to the diaminopimelate epimerase family. As to quaternary structure, homodimer.

The protein resides in the cytoplasm. It catalyses the reaction (2S,6S)-2,6-diaminopimelate = meso-2,6-diaminopimelate. It participates in amino-acid biosynthesis; L-lysine biosynthesis via DAP pathway; DL-2,6-diaminopimelate from LL-2,6-diaminopimelate: step 1/1. Catalyzes the stereoinversion of LL-2,6-diaminopimelate (L,L-DAP) to meso-diaminopimelate (meso-DAP), a precursor of L-lysine and an essential component of the bacterial peptidoglycan. This is Diaminopimelate epimerase from Erythrobacter litoralis (strain HTCC2594).